A 68-amino-acid chain; its full sequence is Protein SlyX homolog (68 aa).

It belongs to the SlyX family.

This is Protein SlyX homolog from Brucella abortus (strain S19).